A 338-amino-acid polypeptide reads, in one-letter code: Glycerol-3-phosphate dehydrogenase [NAD(P)+] (338 aa).

NADPH contacts are provided by Ser-12, Trp-13, Lys-34, and Lys-110. Residues Lys-110, Gly-141, and Ser-143 each contribute to the sn-glycerol 3-phosphate site. Residue Ala-145 participates in NADPH binding. Sn-glycerol 3-phosphate is bound by residues Lys-196, Asp-249, Ser-259, Arg-260, and Asn-261. Lys-196 serves as the catalytic Proton acceptor. Arg-260 contacts NADPH. NADPH is bound by residues Val-284 and Glu-286.

It belongs to the NAD-dependent glycerol-3-phosphate dehydrogenase family.

It is found in the cytoplasm. It carries out the reaction sn-glycerol 3-phosphate + NAD(+) = dihydroxyacetone phosphate + NADH + H(+). It catalyses the reaction sn-glycerol 3-phosphate + NADP(+) = dihydroxyacetone phosphate + NADPH + H(+). It functions in the pathway membrane lipid metabolism; glycerophospholipid metabolism. Its function is as follows. Catalyzes the reduction of the glycolytic intermediate dihydroxyacetone phosphate (DHAP) to sn-glycerol 3-phosphate (G3P), the key precursor for phospholipid synthesis. The protein is Glycerol-3-phosphate dehydrogenase [NAD(P)+] of Ligilactobacillus salivarius (strain UCC118) (Lactobacillus salivarius).